Consider the following 269-residue polypeptide: Regulatory protein RecX (269 aa).

This sequence belongs to the RecX family.

The protein resides in the cytoplasm. Its function is as follows. Modulates RecA activity. The protein is Regulatory protein RecX of Listeria welshimeri serovar 6b (strain ATCC 35897 / DSM 20650 / CCUG 15529 / CIP 8149 / NCTC 11857 / SLCC 5334 / V8).